The sequence spans 257 residues: Phosphonates import ATP-binding protein PhnC 1 (257 aa).

Residues 2-246 (LKITNLTKRY…EMDTIYAGVP (245 aa)) enclose the ABC transporter domain. Residue 35–42 (GSSGAGKS) participates in ATP binding.

The protein belongs to the ABC transporter superfamily. Phosphonates importer (TC 3.A.1.9.1) family. As to quaternary structure, the complex is composed of two ATP-binding proteins (PhnC), two transmembrane proteins (PhnE) and a solute-binding protein (PhnD).

Its subcellular location is the cell inner membrane. The enzyme catalyses phosphonate(out) + ATP + H2O = phosphonate(in) + ADP + phosphate + H(+). Part of the ABC transporter complex PhnCDE involved in phosphonates import. Responsible for energy coupling to the transport system. The chain is Phosphonates import ATP-binding protein PhnC 1 from Ruegeria sp. (strain TM1040) (Silicibacter sp.).